Reading from the N-terminus, the 23-residue chain is Magainin-R2 (23 aa).

Expressed by the skin glands.

It localises to the secreted. Antimicrobial peptide. The chain is Magainin-R2 from Xenopus ruwenzoriensis (Uganda clawed frog).